A 274-amino-acid chain; its full sequence is MNPEHSPLGKATVYANQYDASLLFPIPRAGAREQIGIGAPLPFFGTDIWNAYELSWLNARGKPQIAIATFYVPAESPNIVESKSFKLYLGSFAQTAFESADAVRDALKRDVSAACGASVTVRLATPAEFRKLQMDELDGLSLDRLDLDAHVYETDPSFLTASHDEAPVEETLVTDLLKSNCPVTGQPDWGSVQIHYVGAPIDHAGLLRYIISFRNHTGFHEQCVERIFVDILRACQPVKLAVYARYTRRGGLDINPFRTNYNQPMPDNARTARQ.

80–82 (VES) contacts substrate. 82-83 (SK) is a binding site for NADPH. Residue Cys181 is the Thioimide intermediate of the active site. Asp188 (proton donor) is an active-site residue. 220–221 (HE) lines the substrate pocket. An NADPH-binding site is contributed by 249-250 (RG).

Belongs to the GTP cyclohydrolase I family. QueF type 2 subfamily. As to quaternary structure, homodimer.

The protein resides in the cytoplasm. The catalysed reaction is 7-aminomethyl-7-carbaguanine + 2 NADP(+) = 7-cyano-7-deazaguanine + 2 NADPH + 3 H(+). It participates in tRNA modification; tRNA-queuosine biosynthesis. Functionally, catalyzes the NADPH-dependent reduction of 7-cyano-7-deazaguanine (preQ0) to 7-aminomethyl-7-deazaguanine (preQ1). This Burkholderia mallei (strain NCTC 10247) protein is NADPH-dependent 7-cyano-7-deazaguanine reductase.